A 245-amino-acid polypeptide reads, in one-letter code: Orotidine 5'-phosphate decarboxylase (245 aa).

Substrate-binding positions include D22, K44, 71-80, T131, R192, Q201, G221, and R222; that span reads DLKFHDIPNT. Residue K73 is the Proton donor of the active site.

The protein belongs to the OMP decarboxylase family. Type 1 subfamily. Homodimer.

The catalysed reaction is orotidine 5'-phosphate + H(+) = UMP + CO2. It functions in the pathway pyrimidine metabolism; UMP biosynthesis via de novo pathway; UMP from orotate: step 2/2. Catalyzes the decarboxylation of orotidine 5'-monophosphate (OMP) to uridine 5'-monophosphate (UMP). This chain is Orotidine 5'-phosphate decarboxylase, found in Shigella boydii serotype 18 (strain CDC 3083-94 / BS512).